A 225-amino-acid polypeptide reads, in one-letter code: NAD(P)H-quinone oxidoreductase subunit K, chloroplastic (225 aa).

The [4Fe-4S] cluster site is built by C43, C44, C108, and C139.

Belongs to the complex I 20 kDa subunit family. As to quaternary structure, NDH is composed of at least 16 different subunits, 5 of which are encoded in the nucleus. Requires [4Fe-4S] cluster as cofactor.

It is found in the plastid. Its subcellular location is the chloroplast thylakoid membrane. It carries out the reaction a plastoquinone + NADH + (n+1) H(+)(in) = a plastoquinol + NAD(+) + n H(+)(out). The catalysed reaction is a plastoquinone + NADPH + (n+1) H(+)(in) = a plastoquinol + NADP(+) + n H(+)(out). NDH shuttles electrons from NAD(P)H:plastoquinone, via FMN and iron-sulfur (Fe-S) centers, to quinones in the photosynthetic chain and possibly in a chloroplast respiratory chain. The immediate electron acceptor for the enzyme in this species is believed to be plastoquinone. Couples the redox reaction to proton translocation, and thus conserves the redox energy in a proton gradient. The sequence is that of NAD(P)H-quinone oxidoreductase subunit K, chloroplastic from Arabis hirsuta (Hairy rock-cress).